Reading from the N-terminus, the 421-residue chain is Odorant receptor 67b (421 aa).

The Cytoplasmic portion of the chain corresponds to 1 to 48; it reads MQDQLDHELERIDKLPKLGLLWVEYSAYALGVNIAPRKRSSKYCRLTR. Residues 49 to 69 traverse the membrane as a helical segment; the sequence is ILVLIVNLSIIYSLVAFIMEN. At 70-71 the chain is on the extracellular side; sequence YM. A helical transmembrane segment spans residues 72-92; sequence ISFETYVEAVLLTFQLSVGVV. Residues 93–151 are Cytoplasmic-facing; the sequence is KMFHFQNKVESCSQLVFSTETGEVLKSLGLFQLDLPRKKELLSSVSLILLNNWMIIDRQ. The chain crosses the membrane as a helical span at residues 152–172; the sequence is VMFFFKIVCMPVLYYCVRPYF. The Extracellular segment spans residues 173–217; the sequence is QYIFDCYIKDKDTCEMTLTYPAIVPYLQLGNYEFPSYVIRFFLLQ. The helical transmembrane segment at 218–238 threads the bilayer; sequence SGPLWCFFAVFGFNSLFVVLT. At 239–289 the chain is on the cytoplasmic side; that stretch reads RYESGLIKVLRFLVQNSTSDILVPKDQRVKYLQCCVRLFARISSHHNQIEN. A helical transmembrane segment spans residues 290-310; it reads LFKYIILVQCSVSSILICMLL. Residues 311 to 315 are Extracellular-facing; it reads YKIST. A helical transmembrane segment spans residues 316 to 336; it reads VLEVGWVWMGMIMVYFVTIAL. At 337 to 384 the chain is on the cytoplasmic side; it reads EITLYNVSAQKVESQSELLFHDWYNCSWYNESREFKFMIKMMLLFSRR. Residues 385 to 405 form a helical membrane-spanning segment; it reads TFVLSVGGFTSLSHKFLVQVF. Residues 406 to 421 are Extracellular-facing; it reads RLSANFFLLLRNMNNK.

This sequence belongs to the insect chemoreceptor superfamily. Heteromeric odorant receptor channel (TC 1.A.69) family. Or63a subfamily. In terms of assembly, interacts with Orco. Complexes exist early in the endomembrane system in olfactory sensory neurons (OSNs), coupling these complexes to the conserved ciliary trafficking pathway.

The protein localises to the cell membrane. Functionally, odorant receptor which mediates acceptance or avoidance behavior, depending on its substrates. The odorant receptor repertoire encodes a large collection of odor stimuli that vary widely in identity, intensity, and duration. May form a complex with Orco to form odorant-sensing units, providing sensitive and prolonged odorant signaling and calcium permeability. Involved in the behavioral responses to ethyl acetate, pentyl acetate, methyl caproate, anisole, heptanal, 2-heptanone, r-carvone, nonanoic acid, and pyrazines. This is Odorant receptor 67b (Or67b) from Drosophila melanogaster (Fruit fly).